Consider the following 136-residue polypeptide: Large ribosomal subunit protein uL16 (136 aa).

This sequence belongs to the universal ribosomal protein uL16 family. In terms of assembly, part of the 50S ribosomal subunit.

Functionally, binds 23S rRNA and is also seen to make contacts with the A and possibly P site tRNAs. This is Large ribosomal subunit protein uL16 from Vibrio atlanticus (strain LGP32) (Vibrio splendidus (strain Mel32)).